We begin with the raw amino-acid sequence, 200 residues long: Signal peptidase complex catalytic subunit SEC11 (200 aa).

Residues 1–15 lie on the Cytoplasmic side of the membrane; it reads MFAELAPYLSNPRQT. A helical; Signal-anchor for type II membrane protein membrane pass occupies residues 16 to 33; sequence LAQLLNFALVLSTAFMGW. Topologically, residues 34 to 200 are lumenal; sequence KALSVYTNSS…MGVMVMLQRE (167 aa). An N-linked (GlcNAc...) asparagine glycan is attached at N41. Active-site charge relay system residues include S53 and H92. Residues 101 to 134 are disordered; the sequence is GDGGKKSQRRLEREADKRSGPGLSSPVSHQMLTK. Over residues 103–119 the composition is skewed to basic and acidic residues; sequence GGKKSQRRLEREADKRS. The Charge relay system role is filled by D142. The tract at residues 186 to 197 is C-terminal short (CTS) helix; that stretch reads VLLGIMGVMVML.

It belongs to the peptidase S26B family. In terms of assembly, component of the signal peptidase complex (SPC) composed of a catalytic subunit SEC11 and three accessory subunits SPC1, SPC2 and SPC3. The complex induces a local thinning of the ER membrane which is used to measure the length of the signal peptide (SP) h-region of protein substrates. This ensures the selectivity of the complex towards h-regions shorter than 18-20 amino acids. SPC associates with the translocon complex.

It is found in the endoplasmic reticulum membrane. It catalyses the reaction Cleavage of hydrophobic, N-terminal signal or leader sequences from secreted and periplasmic proteins.. In terms of biological role, catalytic component of the signal peptidase complex (SPC) which catalyzes the cleavage of N-terminal signal sequences from nascent proteins as they are translocated into the lumen of the endoplasmic reticulum. Specifically cleaves N-terminal signal peptides that contain a hydrophobic alpha-helix (h-region) shorter than 18-20 amino acids. This chain is Signal peptidase complex catalytic subunit SEC11 (SEC11), found in Arthroderma benhamiae (strain ATCC MYA-4681 / CBS 112371) (Trichophyton mentagrophytes).